A 309-amino-acid polypeptide reads, in one-letter code: Taste receptor type 2 member 8 (309 aa).

The Extracellular segment spans residues 1-7 (MFSPADN). A helical membrane pass occupies residues 8 to 28 (IFIILITGEFILGILGNGYIA). Residues 29 to 50 (LVNWIDWIKKKKISTVDYILTN) are Cytoplasmic-facing. The chain crosses the membrane as a helical span at residues 51-71 (LVIARICLISVMVVNGIVIVL). The Extracellular segment spans residues 72–82 (NPDVYTKNKQQ). The chain crosses the membrane as a helical span at residues 83 to 103 (IVIFTFWTFANYLNMWITTCL). Topologically, residues 104–131 (NVFYFLKIASSSHPLFLWLKWKIDMVVH) are cytoplasmic. The chain crosses the membrane as a helical span at residues 132 to 152 (WILLGCFAISLLVSLIAAIVL). The Extracellular portion of the chain corresponds to 153 to 184 (SCDYRFHAIAKHKRNITEMFHVSKIPYFEPLT). N-linked (GlcNAc...) asparagine glycosylation is present at Asn-167. A helical transmembrane segment spans residues 185–205 (LFNLFAIVPFIVSLISFFLLV). The Cytoplasmic portion of the chain corresponds to 206 to 239 (RSLWRHTKQIKLYATGSRDPSTEVHVRAIKTMTS). The helical transmembrane segment at 240–260 (FIFFFFLYYISSILMTFSYLM) threads the bilayer. Topologically, residues 261–266 (TKYKLA) are extracellular. A helical membrane pass occupies residues 267-287 (VEFGEIAAILYPLGHSLILIV). Residues 288–309 (LNNKLRQTFVRMLTCRKIACMI) lie on the Cytoplasmic side of the membrane.

Belongs to the G-protein coupled receptor T2R family. In terms of tissue distribution, expressed in subsets of taste receptor cells of the tongue and palate epithelium and exclusively in gustducin-positive cells.

The protein localises to the membrane. Receptor that may play a role in the perception of bitterness and is gustducin-linked. May play a role in sensing the chemical composition of the gastrointestinal content. The activity of this receptor may stimulate alpha gustducin, mediate PLC-beta-2 activation and lead to the gating of TRPM5. The protein is Taste receptor type 2 member 8 (TAS2R8) of Homo sapiens (Human).